A 211-amino-acid chain; its full sequence is Probable GTP-binding protein EngB (211 aa).

In terms of domain architecture, EngB-type G spans 26–200 (SGIEIAFAGR…RQKLDDWFAA (175 aa)). Residues 34 to 41 (GRSNAGKS), 61 to 65 (GRTRL), 79 to 82 (DLPG), 146 to 149 (TKAD), and 179 to 181 (FSS) contribute to the GTP site. The Mg(2+) site is built by serine 41 and threonine 63.

Belongs to the TRAFAC class TrmE-Era-EngA-EngB-Septin-like GTPase superfamily. EngB GTPase family. Mg(2+) is required as a cofactor.

In terms of biological role, necessary for normal cell division and for the maintenance of normal septation. The sequence is that of Probable GTP-binding protein EngB from Sodalis glossinidius (strain morsitans).